The following is a 286-amino-acid chain: 2-dehydro-3-deoxyphosphooctonate aldolase (286 aa).

Belongs to the KdsA family.

The protein localises to the cytoplasm. It carries out the reaction D-arabinose 5-phosphate + phosphoenolpyruvate + H2O = 3-deoxy-alpha-D-manno-2-octulosonate-8-phosphate + phosphate. Its pathway is carbohydrate biosynthesis; 3-deoxy-D-manno-octulosonate biosynthesis; 3-deoxy-D-manno-octulosonate from D-ribulose 5-phosphate: step 2/3. The protein operates within bacterial outer membrane biogenesis; lipopolysaccharide biosynthesis. This chain is 2-dehydro-3-deoxyphosphooctonate aldolase, found in Bradyrhizobium sp. (strain BTAi1 / ATCC BAA-1182).